The primary structure comprises 190 residues: Tegument antigen (190 aa).

2 EF-hand domains span residues 8–43 (SQME…YRLD) and 51–77 (IARF…KVSE). Ca(2+)-binding residues include Asp55, Asp57, Asp59, Lys61, and Glu66.

In terms of tissue distribution, adult and schistosomula tegument.

This is Tegument antigen from Schistosoma mansoni (Blood fluke).